Reading from the N-terminus, the 213-residue chain is Orotate phosphoribosyltransferase (213 aa).

Lys-26 is a binding site for 5-phospho-alpha-D-ribose 1-diphosphate. 34–35 (FF) is a binding site for orotate. Residues 72–73 (YK), Arg-99, Lys-100, Lys-103, His-105, and 124–132 (DDVITAGTA) contribute to the 5-phospho-alpha-D-ribose 1-diphosphate site. Residues Thr-128 and Arg-156 each coordinate orotate.

It belongs to the purine/pyrimidine phosphoribosyltransferase family. PyrE subfamily. Homodimer. Mg(2+) is required as a cofactor.

The enzyme catalyses orotidine 5'-phosphate + diphosphate = orotate + 5-phospho-alpha-D-ribose 1-diphosphate. It participates in pyrimidine metabolism; UMP biosynthesis via de novo pathway; UMP from orotate: step 1/2. In terms of biological role, catalyzes the transfer of a ribosyl phosphate group from 5-phosphoribose 1-diphosphate to orotate, leading to the formation of orotidine monophosphate (OMP). This is Orotate phosphoribosyltransferase from Haemophilus influenzae (strain ATCC 51907 / DSM 11121 / KW20 / Rd).